The sequence spans 553 residues: HTH-type transcriptional regulator SgrR (553 aa).

The region spanning 1-113 (MSTSRLQQQF…RQMLLSQLGR (113 aa)) is the HTH marR-type domain. The segment at residues 26–49 (LQALAEVLNCSRRHVRSLLGKMQH) is a DNA-binding region (H-T-H motif). The tract at residues 163-494 (ELEPDLSHHW…EELHQDIESW (332 aa)) is solute-binding.

In terms of biological role, activates the small RNA gene sgrS under glucose-phosphate stress conditions as well as yfdZ. Represses its own transcription under both stress and non-stress conditions. Might act as a sensor of the intracellular accumulation of phosphoglucose by binding these molecules in its C-terminal solute-binding domain. This is HTH-type transcriptional regulator SgrR from Yersinia pestis bv. Antiqua (strain Antiqua).